The chain runs to 421 residues: Tyrosine--tRNA ligase 1 (421 aa).

L-tyrosine is bound at residue Y35. The 'HIGH' region signature appears at 40 to 49 (PTADSLHIGH). L-tyrosine is bound by residues Y170 and Q174. Residues 231–235 (KFGKT) carry the 'KMSKS' region motif. ATP is bound at residue K234. The region spanning 354-420 (LPLVEILVQS…GKKKYFLLTY (67 aa)) is the S4 RNA-binding domain.

It belongs to the class-I aminoacyl-tRNA synthetase family. TyrS type 1 subfamily. As to quaternary structure, homodimer.

The protein resides in the cytoplasm. The enzyme catalyses tRNA(Tyr) + L-tyrosine + ATP = L-tyrosyl-tRNA(Tyr) + AMP + diphosphate + H(+). Catalyzes the attachment of tyrosine to tRNA(Tyr) in a two-step reaction: tyrosine is first activated by ATP to form Tyr-AMP and then transferred to the acceptor end of tRNA(Tyr). This is Tyrosine--tRNA ligase 1 from Bacillus licheniformis (strain ATCC 14580 / DSM 13 / JCM 2505 / CCUG 7422 / NBRC 12200 / NCIMB 9375 / NCTC 10341 / NRRL NRS-1264 / Gibson 46).